The primary structure comprises 265 residues: Phosphonates import ATP-binding protein PhnC 1 (265 aa).

An ABC transporter domain is found at 7–252 (IEVSNLSKSF…KLNEIYGTAA (246 aa)). 39–46 (GASGSGKS) lines the ATP pocket.

Belongs to the ABC transporter superfamily. Phosphonates importer (TC 3.A.1.9.1) family. As to quaternary structure, the complex is composed of two ATP-binding proteins (PhnC), two transmembrane proteins (PhnE) and a solute-binding protein (PhnD).

Its subcellular location is the cell inner membrane. The catalysed reaction is phosphonate(out) + ATP + H2O = phosphonate(in) + ADP + phosphate + H(+). Part of the ABC transporter complex PhnCDE involved in phosphonates import. Responsible for energy coupling to the transport system. The polypeptide is Phosphonates import ATP-binding protein PhnC 1 (Nostoc sp. (strain PCC 7120 / SAG 25.82 / UTEX 2576)).